The primary structure comprises 283 residues: ATP phosphoribosyltransferase (283 aa).

Belongs to the ATP phosphoribosyltransferase family. Long subfamily. It depends on Mg(2+) as a cofactor.

It is found in the cytoplasm. The enzyme catalyses 1-(5-phospho-beta-D-ribosyl)-ATP + diphosphate = 5-phospho-alpha-D-ribose 1-diphosphate + ATP. It participates in amino-acid biosynthesis; L-histidine biosynthesis; L-histidine from 5-phospho-alpha-D-ribose 1-diphosphate: step 1/9. Feedback inhibited by histidine. Functionally, catalyzes the condensation of ATP and 5-phosphoribose 1-diphosphate to form N'-(5'-phosphoribosyl)-ATP (PR-ATP). Has a crucial role in the pathway because the rate of histidine biosynthesis seems to be controlled primarily by regulation of HisG enzymatic activity. The polypeptide is ATP phosphoribosyltransferase (Nocardia farcinica (strain IFM 10152)).